A 158-amino-acid chain; its full sequence is MIVMEEIIKKAFIESINNIRRGDKEEELKKIQEKIVNAKKIVVATNNQKKFKVIRDIMLRVCNAEIKMLDIDTRFADLTRMPALTKGLIALDIEKADLYIARGRLGAPGSGSMLVILDEKGRVLTASLSPSSVIHKEDIEERIKKELIEALSRIGISI.

This is an uncharacterized protein from Methanocaldococcus jannaschii (strain ATCC 43067 / DSM 2661 / JAL-1 / JCM 10045 / NBRC 100440) (Methanococcus jannaschii).